The chain runs to 434 residues: Cytochrome b-c1 complex subunit 2, mitochondrial (434 aa).

The N-terminal 31 residues, 1–31 (MYSLNRLPRSAAFKSSANLLRRNASTTSAGG), are a transit peptide targeting the mitochondrion.

Belongs to the peptidase M16 family. UQCRC2/QCR2 subfamily. Component of the ubiquinol-cytochrome c oxidoreductase (cytochrome b-c1 complex, complex III, CIII), a multisubunit enzyme composed of 10 subunits. The complex is composed of 3 respiratory subunits cytochrome b (COB), cytochrome c1 (CYT1) and Rieske protein (RIP1), 2 core protein subunits COR1 and QCR2, and 5 low-molecular weight protein subunits QCR6, QCR7, QCR8, QCR9 and QCR10. The complex exists as an obligatory dimer and forms supercomplexes (SCs) in the inner mitochondrial membrane with a monomer or a dimer of cytochrome c oxidase (complex IV, CIV), resulting in 2 different assemblies (supercomplexes III(2)IV and III(2)IV(2)). Interacts with MRJ1.

It localises to the mitochondrion inner membrane. In terms of biological role, component of the ubiquinol-cytochrome c oxidoreductase, a multisubunit transmembrane complex that is part of the mitochondrial electron transport chain which drives oxidative phosphorylation. The respiratory chain contains 3 multisubunit complexes succinate dehydrogenase (complex II, CII), ubiquinol-cytochrome c oxidoreductase (cytochrome b-c1 complex, complex III, CIII) and cytochrome c oxidase (complex IV, CIV), that cooperate to transfer electrons derived from NADH and succinate to molecular oxygen, creating an electrochemical gradient over the inner membrane that drives transmembrane transport and the ATP synthase. The cytochrome b-c1 complex catalyzes electron transfer from ubiquinol to cytochrome c, linking this redox reaction to translocation of protons across the mitochondrial inner membrane, with protons being carried across the membrane as hydrogens on the quinol. In the process called Q cycle, 2 protons are consumed from the matrix, 4 protons are released into the intermembrane space and 2 electrons are passed to cytochrome c. This is Cytochrome b-c1 complex subunit 2, mitochondrial from Cryptococcus neoformans var. grubii serotype A (strain H99 / ATCC 208821 / CBS 10515 / FGSC 9487) (Filobasidiella neoformans var. grubii).